The sequence spans 118 residues: Holo-[acyl-carrier-protein] synthase (118 aa).

Residues D8 and E58 each coordinate Mg(2+).

This sequence belongs to the P-Pant transferase superfamily. AcpS family. It depends on Mg(2+) as a cofactor.

The protein resides in the cytoplasm. It carries out the reaction apo-[ACP] + CoA = holo-[ACP] + adenosine 3',5'-bisphosphate + H(+). Transfers the 4'-phosphopantetheine moiety from coenzyme A to a Ser of acyl-carrier-protein. This chain is Holo-[acyl-carrier-protein] synthase, found in Listeria innocua serovar 6a (strain ATCC BAA-680 / CLIP 11262).